The primary structure comprises 294 residues: Protoheme IX farnesyltransferase (294 aa).

The next 9 membrane-spanning stretches (helical) occupy residues 24–44 (VVLL…PGWV), 48–68 (LIAF…AINH), 96–116 (ALWF…LFVN), 118–138 (LTAL…TGYL), 146–166 (IVIG…AVTG), 172–192 (ALLL…ALAI), 224–244 (VLLL…WIYL), 245–265 (LGAL…YFTD), and 268–288 (VVAM…FVFL).

It belongs to the UbiA prenyltransferase family. Protoheme IX farnesyltransferase subfamily.

It localises to the cell inner membrane. The catalysed reaction is heme b + (2E,6E)-farnesyl diphosphate + H2O = Fe(II)-heme o + diphosphate. It functions in the pathway porphyrin-containing compound metabolism; heme O biosynthesis; heme O from protoheme: step 1/1. Its function is as follows. Converts heme B (protoheme IX) to heme O by substitution of the vinyl group on carbon 2 of heme B porphyrin ring with a hydroxyethyl farnesyl side group. The polypeptide is Protoheme IX farnesyltransferase (Legionella pneumophila (strain Paris)).